We begin with the raw amino-acid sequence, 378 residues long: Queuine tRNA-ribosyltransferase (378 aa).

The active-site Proton acceptor is Asp-91. Substrate contacts are provided by residues 91-95 (DSGGF), Asp-145, Gln-189, and Gly-216. Residues 247 to 253 (GVGKPED) form an RNA binding region. The active-site Nucleophile is the Asp-266. The interval 271–275 (TRNAR) is RNA binding; important for wobble base 34 recognition. Positions 304, 306, 309, and 335 each coordinate Zn(2+).

The protein belongs to the queuine tRNA-ribosyltransferase family. Homodimer. Within each dimer, one monomer is responsible for RNA recognition and catalysis, while the other monomer binds to the replacement base PreQ1. Zn(2+) is required as a cofactor.

It carries out the reaction 7-aminomethyl-7-carbaguanine + guanosine(34) in tRNA = 7-aminomethyl-7-carbaguanosine(34) in tRNA + guanine. It participates in tRNA modification; tRNA-queuosine biosynthesis. Catalyzes the base-exchange of a guanine (G) residue with the queuine precursor 7-aminomethyl-7-deazaguanine (PreQ1) at position 34 (anticodon wobble position) in tRNAs with GU(N) anticodons (tRNA-Asp, -Asn, -His and -Tyr). Catalysis occurs through a double-displacement mechanism. The nucleophile active site attacks the C1' of nucleotide 34 to detach the guanine base from the RNA, forming a covalent enzyme-RNA intermediate. The proton acceptor active site deprotonates the incoming PreQ1, allowing a nucleophilic attack on the C1' of the ribose to form the product. After dissociation, two additional enzymatic reactions on the tRNA convert PreQ1 to queuine (Q), resulting in the hypermodified nucleoside queuosine (7-(((4,5-cis-dihydroxy-2-cyclopenten-1-yl)amino)methyl)-7-deazaguanosine). This is Queuine tRNA-ribosyltransferase from Vibrio vulnificus (strain CMCP6).